Reading from the N-terminus, the 151-residue chain is Protein INO4 (151 aa).

One can recognise a bHLH domain in the interval 45–97 (QIRINHVSSEKKRRELERAIFDELVAVVPDLQPQESRSELIIYLKSLSYLSWL). The disordered stretch occupies residues 112–137 (HEAKTGSSSSSDPVQEQNGNIRDLVP). The segment covering 116–131 (TGSSSSSDPVQEQNGN) has biased composition (polar residues).

Efficient DNA binding requires dimerization with another bHLH protein.

The protein resides in the nucleus. In terms of biological role, transcriptional activator of phospholipid synthetic genes (such as INO1, CHO1/PSS, CHO2/PEM1, OPI3/PEM2, etc.). The protein is Protein INO4 (INO4) of Saccharomyces cerevisiae (strain ATCC 204508 / S288c) (Baker's yeast).